The sequence spans 496 residues: D-2-hydroxyglutarate--pyruvate transhydrogenase DLD3 (496 aa).

A Glycyl lysine isopeptide (Lys-Gly) (interchain with G-Cter in ubiquitin) cross-link involves residue lysine 17. In terms of domain architecture, FAD-binding PCMH-type spans 64 to 243 (YRGQSNLILL…TGVSIVAAAK (180 aa)).

This sequence belongs to the FAD-binding oxidoreductase/transferase type 4 family. It depends on FAD as a cofactor.

It localises to the cytoplasm. It catalyses the reaction (R)-lactate + 2 Fe(III)-[cytochrome c] = 2 Fe(II)-[cytochrome c] + pyruvate + 2 H(+). It carries out the reaction (R)-2-hydroxyglutarate + pyruvate = (R)-lactate + 2-oxoglutarate. In terms of biological role, catalyzes the reversible oxidation of (R)-2-hydroxyglutarate to 2-oxoglutarate coupled to reduction of pyruvate to (R)-lactate. Can also use oxaloacetate as electron acceptor instead of pyruvate producing (R)-malate. The polypeptide is D-2-hydroxyglutarate--pyruvate transhydrogenase DLD3 (DLD3) (Saccharomyces cerevisiae (strain ATCC 204508 / S288c) (Baker's yeast)).